A 213-amino-acid polypeptide reads, in one-letter code: 2-dehydro-3-deoxy-phosphogluconate aldolase (213 aa).

Glu-45 serves as the catalytic Proton acceptor. The pyruvate site is built by Arg-49, Thr-73, and Lys-133. Lys-133 functions as the Schiff-base intermediate with substrate in the catalytic mechanism.

This sequence belongs to the KHG/KDPG aldolase family. In terms of assembly, homotrimer.

It localises to the cytoplasm. The catalysed reaction is 2-dehydro-3-deoxy-6-phospho-D-gluconate = D-glyceraldehyde 3-phosphate + pyruvate. It functions in the pathway carbohydrate acid metabolism; 2-dehydro-3-deoxy-D-gluconate degradation; D-glyceraldehyde 3-phosphate and pyruvate from 2-dehydro-3-deoxy-D-gluconate: step 2/2. In terms of biological role, involved in the degradation of glucose via the Entner-Doudoroff pathway. Catalyzes the reversible, stereospecific retro-aldol cleavage of 2-keto-3-deoxy-6-phosphogluconate (KDPG) to pyruvate and D-glyceraldehyde-3-phosphate. The polypeptide is 2-dehydro-3-deoxy-phosphogluconate aldolase (eda) (Dickeya dadantii (strain 3937) (Erwinia chrysanthemi (strain 3937))).